The chain runs to 36 residues: uncharacterized protein (36 aa).

This is an uncharacterized protein from Treponema pallidum (strain Nichols).